The primary structure comprises 2271 residues: Protein Ycf2 (2271 aa).

Residue 1628–1635 (GSIGTGRS) coordinates ATP.

It belongs to the Ycf2 family.

It localises to the plastid. It is found in the chloroplast stroma. Its function is as follows. Probable ATPase of unknown function. Its presence in a non-photosynthetic plant (Epifagus virginiana) and experiments in tobacco indicate that it has an essential function which is probably not related to photosynthesis. The chain is Protein Ycf2 from Illicium oligandrum (Star anise).